A 508-amino-acid chain; its full sequence is Photosystem II CP47 reaction center protein (508 aa).

6 consecutive transmembrane segments (helical) span residues 21 to 36 (AVHI…WAGS), 101 to 115 (IVFS…IWHW), 140 to 156 (GIHL…FGAF), 203 to 218 (IAAG…FHLS), 237 to 252 (VLSS…AFVV), and 457 to 472 (TFAL…HGAR).

Belongs to the PsbB/PsbC family. PsbB subfamily. PSII is composed of 1 copy each of membrane proteins PsbA, PsbB, PsbC, PsbD, PsbE, PsbF, PsbH, PsbI, PsbJ, PsbK, PsbL, PsbM, PsbT, PsbX, PsbY, PsbZ, Psb30/Ycf12, at least 3 peripheral proteins of the oxygen-evolving complex and a large number of cofactors. It forms dimeric complexes. The cofactor is Binds multiple chlorophylls. PSII binds additional chlorophylls, carotenoids and specific lipids..

It localises to the plastid. Its subcellular location is the chloroplast thylakoid membrane. In terms of biological role, one of the components of the core complex of photosystem II (PSII). It binds chlorophyll and helps catalyze the primary light-induced photochemical processes of PSII. PSII is a light-driven water:plastoquinone oxidoreductase, using light energy to abstract electrons from H(2)O, generating O(2) and a proton gradient subsequently used for ATP formation. This is Photosystem II CP47 reaction center protein from Brachypodium distachyon (Purple false brome).